Here is a 179-residue protein sequence, read N- to C-terminus: ATP-dependent protease subunit HslV (179 aa).

Thr7 is a catalytic residue. Residues Gly162, Cys165, and Thr168 each contribute to the Na(+) site.

This sequence belongs to the peptidase T1B family. HslV subfamily. In terms of assembly, a double ring-shaped homohexamer of HslV is capped on each side by a ring-shaped HslU homohexamer. The assembly of the HslU/HslV complex is dependent on binding of ATP.

Its subcellular location is the cytoplasm. It catalyses the reaction ATP-dependent cleavage of peptide bonds with broad specificity.. Allosterically activated by HslU binding. Its function is as follows. Protease subunit of a proteasome-like degradation complex believed to be a general protein degrading machinery. In Bordetella petrii (strain ATCC BAA-461 / DSM 12804 / CCUG 43448), this protein is ATP-dependent protease subunit HslV.